The sequence spans 552 residues: Dihydroxy-acid dehydratase (552 aa).

Aspartate 78 lines the Mg(2+) pocket. Residue cysteine 119 coordinates [2Fe-2S] cluster. Mg(2+) contacts are provided by aspartate 120 and lysine 121. Lysine 121 carries the post-translational modification N6-carboxylysine. Cysteine 191 provides a ligand contact to [2Fe-2S] cluster. Glutamate 442 serves as a coordination point for Mg(2+). The Proton acceptor role is filled by serine 468.

Belongs to the IlvD/Edd family. As to quaternary structure, homodimer. [2Fe-2S] cluster is required as a cofactor. Requires Mg(2+) as cofactor.

It catalyses the reaction (2R)-2,3-dihydroxy-3-methylbutanoate = 3-methyl-2-oxobutanoate + H2O. It carries out the reaction (2R,3R)-2,3-dihydroxy-3-methylpentanoate = (S)-3-methyl-2-oxopentanoate + H2O. Its pathway is amino-acid biosynthesis; L-isoleucine biosynthesis; L-isoleucine from 2-oxobutanoate: step 3/4. It participates in amino-acid biosynthesis; L-valine biosynthesis; L-valine from pyruvate: step 3/4. Functions in the biosynthesis of branched-chain amino acids. Catalyzes the dehydration of (2R,3R)-2,3-dihydroxy-3-methylpentanoate (2,3-dihydroxy-3-methylvalerate) into 2-oxo-3-methylpentanoate (2-oxo-3-methylvalerate) and of (2R)-2,3-dihydroxy-3-methylbutanoate (2,3-dihydroxyisovalerate) into 2-oxo-3-methylbutanoate (2-oxoisovalerate), the penultimate precursor to L-isoleucine and L-valine, respectively. The sequence is that of Dihydroxy-acid dehydratase from Caldicellulosiruptor bescii (strain ATCC BAA-1888 / DSM 6725 / KCTC 15123 / Z-1320) (Anaerocellum thermophilum).